The chain runs to 178 residues: Large ribosomal subunit protein uL6 (178 aa).

A compositionally biased stretch (basic and acidic residues) spans proline 155–arginine 169. A disordered region spans residues proline 155–lysine 178.

The protein belongs to the universal ribosomal protein uL6 family. Part of the 50S ribosomal subunit.

This protein binds to the 23S rRNA, and is important in its secondary structure. It is located near the subunit interface in the base of the L7/L12 stalk, and near the tRNA binding site of the peptidyltransferase center. This Nitratidesulfovibrio vulgaris (strain DSM 19637 / Miyazaki F) (Desulfovibrio vulgaris) protein is Large ribosomal subunit protein uL6.